The primary structure comprises 104 residues: MFGQWEFDVSPTGGIAVASTEVEHFAGSQHEVDTAEVPSAAWGWSRIDHRTWHIVGLCIFGFLLAMLRGNHVGHVEDWFLITFAAVVLFVLARDLWGRRRGWIR.

Transmembrane regions (helical) follow at residues 47–67 and 72–92; these read IDHR…LAML and VGHV…FVLA.

The protein to M.leprae ML1584.

It is found in the cell membrane. This is an uncharacterized protein from Mycobacterium tuberculosis (strain CDC 1551 / Oshkosh).